Consider the following 159-residue polypeptide: MRKPYRKVVVGGTFDRLHLGHKALLRKAFEVGRYVYVGLTSDEMIRNKPYAEKILPYELRLMDLLKFFEVNGYTNYRIIKINTAIGFADRIKSLEAIVVSEETYKGALLVNRAREERGLKPLEIVTIKLVKSRIGPKISSTLIRAGLIDPFGNPLKKDN.

Belongs to the eukaryotic CoaD family.

Its subcellular location is the cytoplasm. The catalysed reaction is (R)-4'-phosphopantetheine + ATP + H(+) = 3'-dephospho-CoA + diphosphate. The protein operates within cofactor biosynthesis; coenzyme A biosynthesis. Its function is as follows. Reversibly transfers an adenylyl group from ATP to 4'-phosphopantetheine, yielding dephospho-CoA (dPCoA) and pyrophosphate. The chain is Phosphopantetheine adenylyltransferase from Thermococcus gammatolerans (strain DSM 15229 / JCM 11827 / EJ3).